The primary structure comprises 65 residues: Large ribosomal subunit protein bL35 (65 aa).

A disordered region spans residues 1–22 (MPKIKTVRGAAKRFKKTGKGGF). A compositionally biased stretch (basic residues) spans 10-22 (AAKRFKKTGKGGF).

This sequence belongs to the bacterial ribosomal protein bL35 family.

In Klebsiella pneumoniae (strain 342), this protein is Large ribosomal subunit protein bL35.